The primary structure comprises 116 residues: Aspartate 1-decarboxylase (116 aa).

Serine 25 acts as the Schiff-base intermediate with substrate; via pyruvic acid in catalysis. At serine 25 the chain carries Pyruvic acid (Ser). A substrate-binding site is contributed by threonine 57. The active-site Proton donor is the tyrosine 58. 73-75 (GPA) contacts substrate.

The protein belongs to the PanD family. As to quaternary structure, heterooctamer of four alpha and four beta subunits. It depends on pyruvate as a cofactor. In terms of processing, is synthesized initially as an inactive proenzyme, which is activated by self-cleavage at a specific serine bond to produce a beta-subunit with a hydroxyl group at its C-terminus and an alpha-subunit with a pyruvoyl group at its N-terminus.

Its subcellular location is the cytoplasm. It catalyses the reaction L-aspartate + H(+) = beta-alanine + CO2. The protein operates within cofactor biosynthesis; (R)-pantothenate biosynthesis; beta-alanine from L-aspartate: step 1/1. Functionally, catalyzes the pyruvoyl-dependent decarboxylation of aspartate to produce beta-alanine. The sequence is that of Aspartate 1-decarboxylase from Flavobacterium psychrophilum (strain ATCC 49511 / DSM 21280 / CIP 103535 / JIP02/86).